A 1304-amino-acid polypeptide reads, in one-letter code: Splicing factor 3B subunit 1 (1304 aa).

Disordered regions lie at residues 100-119 (QYDPFAEHRPPKIADREDEY) and 124-148 (RTMIISPERLDPFADGGKTPDPKMN). A compositionally biased stretch (basic and acidic residues) spans 104-119 (FAEHRPPKIADREDEY). Phosphothreonine is present on threonine 125. Serine 129 is modified (phosphoserine). An N6-acetyllysine modification is found at lysine 141. The residue at position 142 (threonine 142) is a Phosphothreonine. A Citrulline modification is found at arginine 157. The segment at 172–360 (LAEKAKAGEL…PVLTPGKTPI (189 aa)) is disordered. The residue at position 194 (serine 194) is a Phosphoserine. A phosphothreonine mark is found at threonine 203, threonine 207, and threonine 211. Lysine 214 bears the N6-acetyllysine; alternate mark. A Glycyl lysine isopeptide (Lys-Gly) (interchain with G-Cter in SUMO2); alternate cross-link involves residue lysine 214. 2 positions are modified to phosphothreonine: threonine 223 and threonine 227. The segment at 223–491 (TPGHTPSLRW…VDESTLSPEE (269 aa)) is interaction with PPP1R8. Serine 229 carries the post-translational modification Phosphoserine. Positions 231–241 (RWDETPGRAKG) are enriched in basic and acidic residues. Phosphothreonine is present on residues threonine 235, threonine 244, threonine 248, threonine 257, threonine 261, threonine 267, threonine 273, and threonine 278. The residue at position 287 (serine 287) is a Phosphoserine. The segment covering 291–304 (NRWDETPKTERDTP) has biased composition (basic and acidic residues). Threonine 296, threonine 299, threonine 303, and threonine 313 each carry phosphothreonine. Serine 322 is subject to Phosphoserine. Phosphothreonine occurs at positions 326 and 328. Residue serine 332 is modified to Phosphoserine. Residue threonine 341 is modified to Phosphothreonine. Polar residues predominate over residues 342–352 (PASQMGGSTPV). Phosphoserine is present on residues serine 344 and serine 349. A phosphothreonine mark is found at threonine 350 and threonine 354. Serine 400 is modified (phosphoserine). Residue lysine 413 forms a Glycyl lysine isopeptide (Lys-Gly) (interchain with G-Cter in SUMO2); alternate linkage. Lysine 413 participates in a covalent cross-link: Glycyl lysine isopeptide (Lys-Gly) (interchain with G-Cter in SUMO1); alternate. Threonine 426 bears the Phosphothreonine mark. Lysine 430 is covalently cross-linked (Glycyl lysine isopeptide (Lys-Gly) (interchain with G-Cter in SUMO2)). The residue at position 434 (threonine 434) is a Phosphothreonine; by DYRK1A. A Phosphothreonine modification is found at threonine 436. Serine 488 carries the post-translational modification Phosphoserine. HEAT repeat units follow at residues 529–568 (GPLFNQILPLLMSPTLEDQERHLLVKVIDRILYKLDDLVR), 569–603 (PYVHKILVVIEPLLIDEDYYARVEGREIISNLAKA), 604–641 (AGLATMISTMRPDIDNMDEYVRNTTARAFAVVASALGI), 643–677 (SLLPFLKAVCKSKKSWQARHTGIKIVQQIAILMGC), 680–718 (LPHLRSLVEIIEHGLVDEQQKVRTISALAIAALAEAATP), 763–801 (NYYTREVMLILIREFQSPDEEMKKIVLKVVKQCCGTDGV), 843–881 (KVGAAEIISRIVDDLKDEAEQYRKMVMETIEKIMGNLGA), 1010–1048 (TPPIKDLLPRLTPILKNRHEKVQENCIDLVGRIADRGAE), 1052–1090 (AREWMRICFELLELLKAHKKAIRRATVNTFGYIAKAIGP), 1122–1160 (TCSPFTVLPALMNEYRVPELNVQNGVLKSLSFLFEYIGE), and 1163–1201 (KDYIYAVTPLLEDALMDRDLVHRQTASAVVQHMSLGVYG). Residues 547-550 (QERH) are interaction with PHF5A. Lysine 554 and lysine 562 each carry N6-acetyllysine. The tract at residues 1156–1157 (EY) is interaction with PHF5A. Residues 1248-1304 (QYCLQGLFHPARKVRDVYWKIYNSIYIGSQDALIAHYPRIYNDDKNTYIRYDLDYIL) are interaction with SF3B3 and SF3B5.

This sequence belongs to the SF3B1 family. In terms of assembly, component of the 17S U2 SnRNP complex, a ribonucleoprotein complex that contains small nuclear RNA (snRNA) U2 and a number of specific proteins. Part of the SF3B subcomplex of the 17S U2 SnRNP complex. SF3B associates with the splicing subcomplex SF3A and a 12S RNA unit to form the U2 small nuclear ribonucleoproteins complex (U2 snRNP). Within the SF3B complex, interacts directly (via HEAT domain) with SF3B3, SF3B5, SF3B6 and (via HEAT domain) with PHF5A. The SF3B subcomplex interacts with U2AF2. Identified in the spliceosome C complex. Component of the minor (U12-type spliceosome) spliceosome. Within the minor spliceosome complex, interacts with SCNM1 and CRIPT. Component of the B-WICH complex, at least composed of SMARCA5/SNF2H, BAZ1B/WSTF, SF3B1, DEK, MYO1C, ERCC6, MYBBP1A and DDX21. Phosphorylated form interacts with PPP1R8. Interacts with PQBP1. Interacts with RBM17. Interacts with RBM39. Interacts with SETX. Interacts with RBM15. Interacts with USH1G. Interacts with SDE2. Interacts with U2AF1. Interacts with CACTIN. Interacts with ZRSR1. Interacts with CYREN. Phosphorylated. Phosphorylation occurs concomitantly with the splicing catalytic steps. Phosphorylation on Thr-244, Thr-248 and Thr-313 by cyclin-dependent kinases promotes interaction with PPP1R8 during mitosis. In terms of processing, citrullinated by PADI4. Ubiquitous.

The protein localises to the nucleus. Its subcellular location is the nucleus speckle. Component of the 17S U2 SnRNP complex of the spliceosome, a large ribonucleoprotein complex that removes introns from transcribed pre-mRNAs. The 17S U2 SnRNP complex (1) directly participates in early spliceosome assembly and (2) mediates recognition of the intron branch site during pre-mRNA splicing by promoting the selection of the pre-mRNA branch-site adenosine, the nucleophile for the first step of splicing. Within the 17S U2 SnRNP complex, SF3B1 is part of the SF3B subcomplex, which is required for 'A' complex assembly formed by the stable binding of U2 snRNP to the branchpoint sequence in pre-mRNA. Sequence independent binding of SF3A and SF3B subcomplexes upstream of the branch site is essential, it may anchor U2 snRNP to the pre-mRNA. May also be involved in the assembly of the 'E' complex. Also acts as a component of the minor spliceosome, which is involved in the splicing of U12-type introns in pre-mRNAs. Together with other U2 snRNP complex components may also play a role in the selective processing of microRNAs (miRNAs) from the long primary miRNA transcript, pri-miR-17-92. This Mus musculus (Mouse) protein is Splicing factor 3B subunit 1.